A 724-amino-acid polypeptide reads, in one-letter code: uncharacterized protein (724 aa).

4 disordered regions span residues 97–131 (RKSF…YPSP), 187–252 (ETKI…FETE), 309–434 (FETE…TSKL), and 454–473 (RGVE…VAEK). Over residues 115–128 (TRSASYSESNNSFY) the composition is skewed to polar residues. A coiled-coil region spans residues 187–217 (ETKIGIEEENEESEILAEEKEEEDNDFSVLE). Positions 193–212 (EEENEESEILAEEKEEEDND) are enriched in acidic residues. Composition is skewed to basic and acidic residues over residues 223–252 (QEIK…FETE) and 309–322 (FETE…DHSE). 2 stretches are compositionally biased toward low complexity: residues 323–333 (TTTSETDSTES) and 347–366 (SPQT…SLRS). Pro residues predominate over residues 367–388 (QPPPPPPSPEHKAPAPPPPPPM). Polar residues predominate over residues 400–410 (FSKTHSTNGDN). 2 coiled-coil regions span residues 495 to 522 (SYFQ…HSFQ) and 649 to 678 (MELA…RAKR).

This is an uncharacterized protein from Arabidopsis thaliana (Mouse-ear cress).